The chain runs to 206 residues: High-affinity nitrate transporter-activating protein 2.1 (206 aa).

The N-terminal stretch at 1-27 (MARLAGVAALSLVLVLLGAGVPRPAAA) is a signal peptide. Residues 180–200 (VAAGVFSTFSIAALAFFFVVE) traverse the membrane as a helical segment.

This sequence belongs to the NAR2 family. As to quaternary structure, heterotetramer composed of two NRT2.1, NRT2.2 or NRT2.3 and two NAR2.1. Interacts with NRT2.1, NRT2.2 and isoform 1 of NRT2.3. As to expression, expressed in epidermal cells of primary and lateral roots, root-shoot junction zone, vascular tissues of adventitious root primordia, stems and coleoptiles of germinating seeds.

The protein resides in the cell membrane. Acts as a dual component transporter with NTR2.1, NRT2.2 and NRT2.3. Required for high-affinity nitrate transport. Involved in the regulation of NRT2.1, NRT2.2 and NRT2.3 expression, and in both, HATS (high-affinity transport system) and LATS (low-affinity transport system) activities in plant roots. Imports nitrate with high affinity when expressed with NTR2.1, NTR2.2 or NTR2.3 in a heterologous system (Xenopus oocytes). The polypeptide is High-affinity nitrate transporter-activating protein 2.1 (NAR2.1) (Oryza sativa subsp. japonica (Rice)).